A 199-amino-acid chain; its full sequence is Cytochrome c oxidase subunit 2 (199 aa).

Residues 1–13 (AICSLVLYLLTLM) form a helical membrane-spanning segment. Residues 14–26 (LMEKLSSNTVDAQ) are Mitochondrial matrix-facing. A helical membrane pass occupies residues 27–54 (EVELIWTILPAIVLILLALPSLQILYMM). Residues 55–199 (DEIDEPDLTL…SSLLSISSSL (145 aa)) lie on the Mitochondrial intermembrane side of the membrane. His-128, Cys-163, Glu-165, Cys-167, His-171, and Met-174 together coordinate Cu cation. Residue Glu-165 participates in Mg(2+) binding.

The protein belongs to the cytochrome c oxidase subunit 2 family. As to quaternary structure, component of the cytochrome c oxidase (complex IV, CIV), a multisubunit enzyme composed of 14 subunits. The complex is composed of a catalytic core of 3 subunits MT-CO1, MT-CO2 and MT-CO3, encoded in the mitochondrial DNA, and 11 supernumerary subunits COX4I, COX5A, COX5B, COX6A, COX6B, COX6C, COX7A, COX7B, COX7C, COX8 and NDUFA4, which are encoded in the nuclear genome. The complex exists as a monomer or a dimer and forms supercomplexes (SCs) in the inner mitochondrial membrane with NADH-ubiquinone oxidoreductase (complex I, CI) and ubiquinol-cytochrome c oxidoreductase (cytochrome b-c1 complex, complex III, CIII), resulting in different assemblies (supercomplex SCI(1)III(2)IV(1) and megacomplex MCI(2)III(2)IV(2)). Found in a complex with TMEM177, COA6, COX18, COX20, SCO1 and SCO2. Interacts with TMEM177 in a COX20-dependent manner. Interacts with COX20. Interacts with COX16. Cu cation is required as a cofactor.

The protein resides in the mitochondrion inner membrane. The catalysed reaction is 4 Fe(II)-[cytochrome c] + O2 + 8 H(+)(in) = 4 Fe(III)-[cytochrome c] + 2 H2O + 4 H(+)(out). Component of the cytochrome c oxidase, the last enzyme in the mitochondrial electron transport chain which drives oxidative phosphorylation. The respiratory chain contains 3 multisubunit complexes succinate dehydrogenase (complex II, CII), ubiquinol-cytochrome c oxidoreductase (cytochrome b-c1 complex, complex III, CIII) and cytochrome c oxidase (complex IV, CIV), that cooperate to transfer electrons derived from NADH and succinate to molecular oxygen, creating an electrochemical gradient over the inner membrane that drives transmembrane transport and the ATP synthase. Cytochrome c oxidase is the component of the respiratory chain that catalyzes the reduction of oxygen to water. Electrons originating from reduced cytochrome c in the intermembrane space (IMS) are transferred via the dinuclear copper A center (CU(A)) of subunit 2 and heme A of subunit 1 to the active site in subunit 1, a binuclear center (BNC) formed by heme A3 and copper B (CU(B)). The BNC reduces molecular oxygen to 2 water molecules using 4 electrons from cytochrome c in the IMS and 4 protons from the mitochondrial matrix. In Casuarius bennetti (Dwarf cassowary), this protein is Cytochrome c oxidase subunit 2 (MT-CO2).